Here is a 186-residue protein sequence, read N- to C-terminus: Acetyltransferase PA2578 (186 aa).

Positions Leu-12 to Gln-176 constitute an N-acetyltransferase domain. Residues Gln-37, Ile-97–Leu-99, Gly-105, Asn-137, and His-142–Tyr-144 each bind CoA.

In terms of assembly, homodimer.

Functionally, catalyzes the transfer of an acetyl group from acetyl coenzyme A (AcCoA) to an acceptor substrate and releases both CoA and the acetylated product. It prefers the antibiotic chloramphenicol. The sequence is that of Acetyltransferase PA2578 from Pseudomonas aeruginosa (strain ATCC 15692 / DSM 22644 / CIP 104116 / JCM 14847 / LMG 12228 / 1C / PRS 101 / PAO1).